Consider the following 89-residue polypeptide: Small ribosomal subunit protein uS14 (89 aa).

This sequence belongs to the universal ribosomal protein uS14 family. In terms of assembly, part of the 30S ribosomal subunit. Contacts proteins S3 and S10.

Binds 16S rRNA, required for the assembly of 30S particles and may also be responsible for determining the conformation of the 16S rRNA at the A site. The protein is Small ribosomal subunit protein uS14 of Chlorobaculum tepidum (strain ATCC 49652 / DSM 12025 / NBRC 103806 / TLS) (Chlorobium tepidum).